The chain runs to 464 residues: Bifunctional protein GlmU (464 aa).

Positions Met1–Arg236 are pyrophosphorylase. Residues Leu6–Gly9, Lys20, and Gly77–Thr78 each bind UDP-N-acetyl-alpha-D-glucosamine. Asp102 provides a ligand contact to Mg(2+). UDP-N-acetyl-alpha-D-glucosamine contacts are provided by Gly145, Glu161, Asn176, and Asn234. Position 234 (Asn234) interacts with Mg(2+). A linker region spans residues Trp237–Arg257. Residues Gly258–Asp464 are N-acetyltransferase. UDP-N-acetyl-alpha-D-glucosamine is bound by residues Arg340 and Lys358. The Proton acceptor role is filled by His370. UDP-N-acetyl-alpha-D-glucosamine is bound by residues Tyr373 and Asn384. Residues Ala387, Asn393 to Tyr394, Ser412, Gly430, and Arg447 contribute to the acetyl-CoA site.

The protein in the N-terminal section; belongs to the N-acetylglucosamine-1-phosphate uridyltransferase family. In the C-terminal section; belongs to the transferase hexapeptide repeat family. As to quaternary structure, homotrimer. The cofactor is Mg(2+).

It localises to the cytoplasm. The enzyme catalyses alpha-D-glucosamine 1-phosphate + acetyl-CoA = N-acetyl-alpha-D-glucosamine 1-phosphate + CoA + H(+). It carries out the reaction N-acetyl-alpha-D-glucosamine 1-phosphate + UTP + H(+) = UDP-N-acetyl-alpha-D-glucosamine + diphosphate. It functions in the pathway nucleotide-sugar biosynthesis; UDP-N-acetyl-alpha-D-glucosamine biosynthesis; N-acetyl-alpha-D-glucosamine 1-phosphate from alpha-D-glucosamine 6-phosphate (route II): step 2/2. It participates in nucleotide-sugar biosynthesis; UDP-N-acetyl-alpha-D-glucosamine biosynthesis; UDP-N-acetyl-alpha-D-glucosamine from N-acetyl-alpha-D-glucosamine 1-phosphate: step 1/1. Its pathway is bacterial outer membrane biogenesis; LPS lipid A biosynthesis. Catalyzes the last two sequential reactions in the de novo biosynthetic pathway for UDP-N-acetylglucosamine (UDP-GlcNAc). The C-terminal domain catalyzes the transfer of acetyl group from acetyl coenzyme A to glucosamine-1-phosphate (GlcN-1-P) to produce N-acetylglucosamine-1-phosphate (GlcNAc-1-P), which is converted into UDP-GlcNAc by the transfer of uridine 5-monophosphate (from uridine 5-triphosphate), a reaction catalyzed by the N-terminal domain. The chain is Bifunctional protein GlmU from Aquifex aeolicus (strain VF5).